The chain runs to 295 residues: Probable porphobilinogen deaminase (295 aa).

The residue at position 234 (cysteine 234) is an S-(dipyrrolylmethanemethyl)cysteine.

It belongs to the HMBS family. The cofactor is dipyrromethane.

The catalysed reaction is 4 porphobilinogen + H2O = hydroxymethylbilane + 4 NH4(+). Its pathway is porphyrin-containing compound metabolism; protoporphyrin-IX biosynthesis; coproporphyrinogen-III from 5-aminolevulinate: step 2/4. Functionally, tetrapolymerization of the monopyrrole PBG into the hydroxymethylbilane pre-uroporphyrinogen in several discrete steps. In Thermoplasma acidophilum (strain ATCC 25905 / DSM 1728 / JCM 9062 / NBRC 15155 / AMRC-C165), this protein is Probable porphobilinogen deaminase (hemC).